The following is a 43-amino-acid chain: Protein PsbN (43 aa).

Residues 5–27 (ALVAISISRLLVSFTGYALYTAF) traverse the membrane as a helical segment.

It belongs to the PsbN family.

Its subcellular location is the plastid. It is found in the chloroplast thylakoid membrane. May play a role in photosystem I and II biogenesis. In Bowenia serrulata (Byfield fern), this protein is Protein PsbN.